Reading from the N-terminus, the 124-residue chain is Small ribosomal subunit protein bS6 (124 aa).

Belongs to the bacterial ribosomal protein bS6 family.

Functionally, binds together with bS18 to 16S ribosomal RNA. The protein is Small ribosomal subunit protein bS6 of Actinobacillus pleuropneumoniae serotype 7 (strain AP76).